The primary structure comprises 430 residues: Serine hydroxymethyltransferase 1 (430 aa).

Residues L132 and 136-138 contribute to the (6S)-5,6,7,8-tetrahydrofolate site; that span reads GHL. The residue at position 241 (K241) is an N6-(pyridoxal phosphate)lysine.

This sequence belongs to the SHMT family. In terms of assembly, homodimer. The cofactor is pyridoxal 5'-phosphate.

It localises to the cytoplasm. The enzyme catalyses (6R)-5,10-methylene-5,6,7,8-tetrahydrofolate + glycine + H2O = (6S)-5,6,7,8-tetrahydrofolate + L-serine. It participates in one-carbon metabolism; tetrahydrofolate interconversion. It functions in the pathway amino-acid biosynthesis; glycine biosynthesis; glycine from L-serine: step 1/1. Functionally, catalyzes the reversible interconversion of serine and glycine with tetrahydrofolate (THF) serving as the one-carbon carrier. This reaction serves as the major source of one-carbon groups required for the biosynthesis of purines, thymidylate, methionine, and other important biomolecules. Also exhibits THF-independent aldolase activity toward beta-hydroxyamino acids, producing glycine and aldehydes, via a retro-aldol mechanism. The sequence is that of Serine hydroxymethyltransferase 1 from Bordetella parapertussis (strain 12822 / ATCC BAA-587 / NCTC 13253).